A 226-amino-acid chain; its full sequence is Protein-L-isoaspartate O-methyltransferase (226 aa).

Ser75 is a catalytic residue.

This sequence belongs to the methyltransferase superfamily. L-isoaspartyl/D-aspartyl protein methyltransferase family.

It is found in the cytoplasm. The catalysed reaction is [protein]-L-isoaspartate + S-adenosyl-L-methionine = [protein]-L-isoaspartate alpha-methyl ester + S-adenosyl-L-homocysteine. Catalyzes the methyl esterification of L-isoaspartyl residues in peptides and proteins that result from spontaneous decomposition of normal L-aspartyl and L-asparaginyl residues. It plays a role in the repair and/or degradation of damaged proteins. In Lawsonia intracellularis (strain PHE/MN1-00), this protein is Protein-L-isoaspartate O-methyltransferase.